The following is a 337-amino-acid chain: Glyceraldehyde-3-phosphate dehydrogenase (337 aa).

NAD(+) is bound by residues 13–14 (RI), Asp-35, and Arg-80. Residues 151-153 (SCT), Thr-182, 211-212 (TG), and Arg-234 each bind D-glyceraldehyde 3-phosphate. Cys-152 functions as the Nucleophile in the catalytic mechanism. Residue Asn-316 participates in NAD(+) binding.

It belongs to the glyceraldehyde-3-phosphate dehydrogenase family. As to quaternary structure, homotetramer.

The protein resides in the cytoplasm. It carries out the reaction D-glyceraldehyde 3-phosphate + phosphate + NAD(+) = (2R)-3-phospho-glyceroyl phosphate + NADH + H(+). It participates in carbohydrate degradation; glycolysis; pyruvate from D-glyceraldehyde 3-phosphate: step 1/5. In Monascus purpureus (Red mold), this protein is Glyceraldehyde-3-phosphate dehydrogenase (GPD1).